A 610-amino-acid polypeptide reads, in one-letter code: Elongation factor 4 (610 aa).

In terms of domain architecture, tr-type G spans 11–193 (EKIRNFSIIA…QIVEKVPAPT (183 aa)). GTP is bound by residues 23–28 (DHGKST) and 140–143 (NKID).

Belongs to the TRAFAC class translation factor GTPase superfamily. Classic translation factor GTPase family. LepA subfamily.

The protein resides in the cell membrane. The enzyme catalyses GTP + H2O = GDP + phosphate + H(+). In terms of biological role, required for accurate and efficient protein synthesis under certain stress conditions. May act as a fidelity factor of the translation reaction, by catalyzing a one-codon backward translocation of tRNAs on improperly translocated ribosomes. Back-translocation proceeds from a post-translocation (POST) complex to a pre-translocation (PRE) complex, thus giving elongation factor G a second chance to translocate the tRNAs correctly. Binds to ribosomes in a GTP-dependent manner. The chain is Elongation factor 4 from Streptococcus suis (strain 98HAH33).